The sequence spans 124 residues: Small ribosomal subunit protein bS6 (124 aa).

Residues 100 to 124 (KERRAARQKTGETQENVSQEESSTN) are disordered. A compositionally biased stretch (polar residues) spans 110–124 (GETQENVSQEESSTN).

Belongs to the bacterial ribosomal protein bS6 family.

Binds together with bS18 to 16S ribosomal RNA. The sequence is that of Small ribosomal subunit protein bS6 from Fervidobacterium nodosum (strain ATCC 35602 / DSM 5306 / Rt17-B1).